A 217-amino-acid polypeptide reads, in one-letter code: Cytidylate kinase (217 aa).

10-18 provides a ligand contact to ATP; the sequence is GPAGAGKST.

This sequence belongs to the cytidylate kinase family. Type 1 subfamily.

The protein resides in the cytoplasm. It carries out the reaction CMP + ATP = CDP + ADP. The enzyme catalyses dCMP + ATP = dCDP + ADP. This chain is Cytidylate kinase, found in Clostridium botulinum (strain Langeland / NCTC 10281 / Type F).